Reading from the N-terminus, the 155-residue chain is MKIKIITLGEKPPKWVSDGYDEYKKRLSKSIPLELIELPIAKRTKTGNPKLWMEQEAKTILGKLNDSDHLVILDVNSKIISTEELADKMQNWKFNNPNVVILIGGPDGIDQSIKDIAKEKISISKMTFPHPLVRIIIAEQLYRAYTILEGHPYHK.

Residues L73, G104, and 123-128 (ISKMTF) each bind S-adenosyl-L-methionine.

It belongs to the RNA methyltransferase RlmH family. In terms of assembly, homodimer.

It is found in the cytoplasm. It catalyses the reaction pseudouridine(1915) in 23S rRNA + S-adenosyl-L-methionine = N(3)-methylpseudouridine(1915) in 23S rRNA + S-adenosyl-L-homocysteine + H(+). Specifically methylates the pseudouridine at position 1915 (m3Psi1915) in 23S rRNA. This Francisella tularensis subsp. novicida (strain U112) protein is Ribosomal RNA large subunit methyltransferase H.